The sequence spans 3432 residues: Genome polyprotein (3432 aa).

Residues 2 to 15 (TKKPGGPGKNRAIN) are interaction with host EXOC1. Residues 2–109 (TKKPGGPGKN…RKQNKRGGNE (108 aa)) are Cytoplasmic-facing. Residues 37–72 (LLDGRGPVRFVLALITFFKFTALAPTKALLGRWKAV) form a hydrophobic; homodimerization of capsid protein C region. Residues 106 to 127 (GGNEGSIMWLASLAVVIACAGA) constitute a propeptide, ER anchor for the capsid protein C, removed in mature form by serine protease NS3. Residues 110–130 (GSIMWLASLAVVIACAGAMKL) traverse the membrane as a helical segment. At 131-253 (SNFQGKLLMT…ATRYLMKTEN (123 aa)) the chain is on the extracellular side. Residue N142 is glycosylated (N-linked (GlcNAc...) asparagine; by host). Residues 254–274 (WIIRNPGYAFLAAVLGWMLGS) traverse the membrane as a helical segment. Residues 275–279 (NNGQR) lie on the Cytoplasmic side of the membrane. Residues 280-294 (VVFTILLLLVAPAYS) traverse the membrane as a helical segment. Residues 295–746 (FNCLGMGNRD…QVFGGAFRTL (452 aa)) lie on the Extracellular side of the membrane. Cystine bridges form between C297–C324, C354–C410, C354–C415, C368–C399, C386–C410, and C386–C415. The segment at 392 to 405 (DRGWGNGCGLFGKG) is fusion peptide. N448 carries an N-linked (GlcNAc...) asparagine; by host glycan. Disulfide bonds link C484-C581 and C598-C629. Residues 747-767 (FGGMSWITQGLMGALLLWMGV) form a helical membrane-spanning segment. At 768–773 (NARDRS) the chain is on the cytoplasmic side. Residues 774–794 (IALAFLATGGVLVFLATNVHA) form a helical membrane-spanning segment. The Extracellular portion of the chain corresponds to 795 to 1219 (DTGCAIDITR…AFAEANSGGD (425 aa)). 6 cysteine pairs are disulfide-bonded: C798/C809, C849/C937, C973/C1017, C1074/C1123, C1085/C1106, and C1107/C1110. N-linked (GlcNAc...) asparagine; by host glycosylation is found at N924 and N1001. A helical membrane pass occupies residues 1220–1240 (VLHLALIAVFKIQPAFLVMNM). Residues 1241–1250 (LSTRWTNQEN) are Cytoplasmic-facing. A helical membrane pass occupies residues 1251–1271 (VVLVLGAAFFQLASVDLQIGV). H1272 is a topological domain (lumenal). A helical transmembrane segment spans residues 1273-1293 (GILNAAAIAWMIVRAITFPTT). At 1294-1309 (SSVTMPVLALLTPGMR) the chain is on the cytoplasmic side. A helical transmembrane segment spans residues 1310–1330 (ALYLDTYRIILLVIGICSLLH). Residues 1331–1341 (ERKKTMAKKKG) lie on the Lumenal side of the membrane. Residues 1342–1362 (AVLLGLALTSTGWFSPTTIAA) traverse the membrane as a helical segment. The Cytoplasmic segment spans residues 1363 to 1374 (GLMVCNPNKKRG). The helical transmembrane segment at 1375 to 1395 (WPATEFLSAVGLMFAIVGGLA) threads the bilayer. The Lumenal portion of the chain corresponds to 1396-1398 (ELD). The helical transmembrane segment at 1399–1419 (IESMSIPFMLAGLMAVSYVVS) threads the bilayer. Residues 1420 to 1476 (GKATDMWLERAADISWEMDAAITGSSRRLDVKLDDDGDFHLIDDPGVPWKVWVLRMS) are Cytoplasmic-facing. The interacts with and activates NS3 protease stretch occupies residues 1427–1466 (LERAADISWEMDAAITGSSRRLDVKLDDDGDFHLIDDPGV). The segment at residues 1477-1497 (CIGLAALTPWAIVPAAFGYWL) is an intramembrane region (helical). Residues 1498 to 2173 (TLKTTKRGGV…RMALEELPDA (676 aa)) are Cytoplasmic-facing. Residues 1505 to 1682 (GGVFWDTPSP…DRQEEPVPEA (178 aa)) form the Peptidase S7 domain. Residues H1555, D1579, and S1639 each act as charge relay system; for serine protease NS3 activity in the active site. The Helicase ATP-binding domain occupies 1685–1841 (PNMLRKRQMT…DSNAPIHDLQ (157 aa)). The important for RNA-binding stretch occupies residues 1689-1692 (RKRQ). 1698 to 1705 (LHPGSGKT) contributes to the ATP binding site. A DEAH box motif is present at residues 1789–1792 (DEAH). One can recognise a Helicase C-terminal domain in the interval 1852–2017 (GYEWITEYAG…GLVAQLYGPE (166 aa)). K1893 carries the post-translational modification N6-acetyllysine; by host. The tract at residues 1950 to 1972 (NPSPITSASAAQRRGRVGRNPNQ) is disordered. Positions 2168-2172 (EELPD) are regulates the ATPase activity of NS3 helicase. Residues 2174–2194 (LETITLIVAITVMTGGFFLLM) traverse the membrane as a helical segment. Residues 2195–2199 (MQRKG) lie on the Lumenal side of the membrane. The helical intramembrane region spans 2200 to 2220 (IGKMGLGALVLTLATFFLWAA). Position 2221 (E2221) is a topological domain, lumenal. A helical membrane pass occupies residues 2222-2242 (VPGTKIAGTLLIALLLMVVLI). The Cytoplasmic portion of the chain corresponds to 2243–2257 (PEPEKQRSQTDNQLA). The chain crosses the membrane as a helical span at residues 2258 to 2278 (VFLICVLTVVGVVAANEYGML). Residues 2279-2311 (EKTKADLKSMFGGKTQASGLTGLPSMALDLRPA) are Lumenal-facing. The segment at residues 2312 to 2332 (TAWALYGGSTVVLTPLLKHLI) is an intramembrane region (helical). The Lumenal portion of the chain corresponds to 2333 to 2368 (TSEYVTTSLASINSQAGSLFVLPRGVPFTDLDLTVG). A helical transmembrane segment spans residues 2369 to 2389 (LVFLGCWGQITLTTFLTAMVL). Over 2390 to 2444 (ATLHYGYMLPGWQAEALRAAQRRTAAGIMKNAVVDGMVATDVPELERTTPLMQKK) the chain is Cytoplasmic. The helical transmembrane segment at 2445 to 2465 (VGQVLLIGVSVAAFLVNPNVT) threads the bilayer. Residues 2466 to 2469 (TVRE) are Lumenal-facing. The chain crosses the membrane as a helical span at residues 2470–2490 (AGVLVTAATLTLWDNGASAVW). At 2491-3432 (NSTTATGLCH…DVLIQEDRVI (942 aa)) the chain is on the cytoplasmic side. An mRNA cap 0-1 NS5-type MT domain is found at 2528-2793 (GRPGGRTLGE…DVNLGSGTRA (266 aa)). Position 2583 (S2583) interacts with S-adenosyl-L-methionine. A Phosphoserine modification is found at S2583. K2588 (for 2'-O-MTase activity) is an active-site residue. G2613, W2614, T2631, K2632, D2658, and V2659 together coordinate S-adenosyl-L-methionine. The active-site For 2'-O-MTase activity is the D2673. I2674 is a binding site for S-adenosyl-L-methionine. Residues K2709 and E2745 each act as for 2'-O-MTase activity in the active site. Residue Y2747 participates in S-adenosyl-L-methionine binding. Zn(2+) is bound by residues E2967, H2971, C2976, and C2979. Residues 3057–3209 (GKMYADDTAG…KPLDDRFATA (153 aa)) form the RdRp catalytic domain. 3 residues coordinate Zn(2+): H3244, C3260, and C3379.

It in the N-terminal section; belongs to the class I-like SAM-binding methyltransferase superfamily. mRNA cap 0-1 NS5-type methyltransferase family. As to quaternary structure, homodimer. Interacts (via N-terminus) with host EXOC1 (via C-terminus); this interaction results in EXOC1 degradation through the proteasome degradation pathway. In terms of assembly, forms heterodimers with envelope protein E in the endoplasmic reticulum and Golgi. Homodimer; in the endoplasmic reticulum and Golgi. Interacts with protein prM. Interacts with non-structural protein 1. Interacts with host HSPA5. As to quaternary structure, homodimer; Homohexamer when secreted. Interacts with envelope protein E. NS1 interacts with NS4B. Interacts with host complement protein CFH; this interaction leads to the degradation of C3. In terms of assembly, interacts (via N-terminus) with serine protease NS3. Forms a heterodimer with serine protease NS3. May form homooligomers. As to quaternary structure, forms a heterodimer with NS2B. Interacts with non-structural protein 2A (via N-terminus). Interacts with NS4B. Interacts with unphosphorylated RNA-directed RNA polymerase NS5; this interaction stimulates RNA-directed RNA polymerase NS5 guanylyltransferase activity. Interacts with host ILF2. In terms of assembly, interacts with serine protease NS3. Homodimer. Interacts with host STAT2; this interaction inhibits the phosphorylation of the latter, and, when all viral proteins are present (polyprotein), targets STAT2 for degradation. Interacts with serine protease NS3. Mn(2+) is required as a cofactor. Mg(2+) serves as cofactor. Specific enzymatic cleavages in vivo yield mature proteins. Cleavages in the lumen of endoplasmic reticulum are performed by host signal peptidase, whereas cleavages in the cytoplasmic side are performed by serine protease NS3. Signal cleavage at the 2K-4B site requires a prior NS3 protease-mediated cleavage at the 4A-2K site. Post-translationally, cleaved in post-Golgi vesicles by a host furin, releasing the mature small envelope protein M, and peptide pr. This cleavage is incomplete as up to 30% of viral particles still carry uncleaved prM. In terms of processing, N-glycosylated. N-glycosylated. The excreted form is glycosylated and this is required for efficient secretion of the protein from infected cells. Post-translationally, acetylated by host KAT5. Acetylation modulates NS3 RNA-binding and unwinding activities and plays an important positive role for viral replication. In terms of processing, phosphorylated on serines residues. This phosphorylation may trigger NS5 nuclear localization.

It localises to the virion. The protein localises to the host nucleus. Its subcellular location is the host cytoplasm. The protein resides in the host perinuclear region. It is found in the secreted. It localises to the virion membrane. The protein localises to the host endoplasmic reticulum membrane. Its subcellular location is the host cell surface. The catalysed reaction is Selective hydrolysis of -Xaa-Xaa-|-Yaa- bonds in which each of the Xaa can be either Arg or Lys and Yaa can be either Ser or Ala.. The enzyme catalyses RNA(n) + a ribonucleoside 5'-triphosphate = RNA(n+1) + diphosphate. It carries out the reaction a ribonucleoside 5'-triphosphate + H2O = a ribonucleoside 5'-diphosphate + phosphate + H(+). It catalyses the reaction ATP + H2O = ADP + phosphate + H(+). The catalysed reaction is a 5'-end (5'-triphosphoguanosine)-ribonucleoside in mRNA + S-adenosyl-L-methionine = a 5'-end (N(7)-methyl 5'-triphosphoguanosine)-ribonucleoside in mRNA + S-adenosyl-L-homocysteine. The enzyme catalyses a 5'-end (N(7)-methyl 5'-triphosphoguanosine)-ribonucleoside in mRNA + S-adenosyl-L-methionine = a 5'-end (N(7)-methyl 5'-triphosphoguanosine)-(2'-O-methyl-ribonucleoside) in mRNA + S-adenosyl-L-homocysteine + H(+). Its function is as follows. Plays a role in virus budding by binding to the cell membrane and gathering the viral RNA into a nucleocapsid that forms the core of a mature virus particle. During virus entry, may induce genome penetration into the host cytoplasm after hemifusion induced by the surface proteins. Can migrate to the cell nucleus where it modulates host functions. Overcomes the anti-viral effects of host EXOC1 by sequestering and degrading the latter through the proteasome degradation pathway. Inhibits RNA silencing by interfering with host Dicer. Functionally, prevents premature fusion activity of envelope proteins in trans-Golgi by binding to envelope protein E at pH6.0. After virion release in extracellular space, gets dissociated from E dimers. In terms of biological role, acts as a chaperone for envelope protein E during intracellular virion assembly by masking and inactivating envelope protein E fusion peptide. prM is the only viral peptide matured by host furin in the trans-Golgi network probably to avoid catastrophic activation of the viral fusion activity in acidic Golgi compartment prior to virion release. prM-E cleavage is inefficient, and many virions are only partially matured. These uncleaved prM would play a role in immune evasion. Its function is as follows. May play a role in virus budding. Exerts cytotoxic effects by activating a mitochondrial apoptotic pathway through M ectodomain. May display a viroporin activity. Binds to host cell surface receptor and mediates fusion between viral and cellular membranes. Efficient virus attachment to cell is, at least in part, mediated by host HSPA5. Envelope protein is synthesized in the endoplasmic reticulum in the form of heterodimer with protein prM. They play a role in virion budding in the ER, and the newly formed immature particle is covered with 60 spikes composed of heterodimer between precursor prM and envelope protein E. The virion is transported to the Golgi apparatus where the low pH causes dissociation of PrM-E heterodimers and formation of E homodimers. prM-E cleavage is inefficient, and many virions are only partially matured. These uncleaved prM would play a role in immune evasion. Functionally, involved in immune evasion, pathogenesis and viral replication. Once cleaved off the polyprotein, is targeted to three destinations: the viral replication cycle, the plasma membrane and the extracellular compartment. Essential for viral replication. Required for formation of the replication complex and recruitment of other non-structural proteins to the ER-derived membrane structures. Excreted as a hexameric lipoparticle that plays a role against host immune response. Antagonizing the complement function. Binds to the host macrophages and dendritic cells. Inhibits signal transduction originating from Toll-like receptor 3 (TLR3). In terms of biological role, component of the viral RNA replication complex that functions in virion assembly and antagonizes the host alpha/beta interferon antiviral response. Its function is as follows. Required cofactor for the serine protease function of NS3. May have membrane-destabilizing activity and form viroporins. Displays three enzymatic activities: serine protease, NTPase and RNA helicase. NS3 serine protease, in association with NS2B, performs its autocleavage and cleaves the polyprotein at dibasic sites in the cytoplasm: C-prM, NS2A-NS2B, NS2B-NS3, NS3-NS4A, NS4A-2K and NS4B-NS5. NS3 RNA helicase binds RNA and unwinds dsRNA in the 3' to 5' direction. Functionally, regulates the ATPase activity of the NS3 helicase activity. NS4A allows NS3 helicase to conserve energy during unwinding. In terms of biological role, functions as a signal peptide for NS4B and is required for the interferon antagonism activity of the latter. Its function is as follows. Induces the formation of ER-derived membrane vesicles where the viral replication takes place. Inhibits interferon (IFN)-induced host STAT1 phosphorylation and nuclear translocation, thereby preventing the establishment of cellular antiviral state by blocking the IFN-alpha/beta pathway. Inhibits STAT2 translocation in the nucleus after IFN-alpha treatment. Replicates the viral (+) and (-) RNA genome. Performs the capping of genomes in the cytoplasm. NS5 methylates viral RNA cap at guanine N-7 and ribose 2'-O positions. Besides its role in RNA genome replication, also prevents the establishment of cellular antiviral state by blocking the interferon-alpha/beta (IFN-alpha/beta) signaling pathway. Inhibits host TYK2 and STAT2 phosphorylation, thereby preventing activation of JAK-STAT signaling pathway. The protein is Genome polyprotein of Ardeidae (herons).